Reading from the N-terminus, the 720-residue chain is Chloroplastic group IIA intron splicing facilitator CRS1, chloroplastic (720 aa).

Residues 1 to 77 (MRNGINILSY…DQFRENRGVS (77 aa)) constitute a chloroplast transit peptide. The stretch at 131 to 159 (KAMKKIVRNVEKLDEDSDSEETQMDDLSE) forms a coiled coil. CRM domains are found at residues 205–301 (LILD…EGQD) and 359–456 (AKLT…EVAD). Coiled-coil stretches lie at residues 447-477 (KDFLSDEVADLVEDRERLLSRYQHFEETKRE) and 517-553 (RNLETEAEKARLEKELKSQEHKLSILKSKIEKSNMEL). The region spanning 570–670 (EILTNEEREC…KNYKRPSSKL (101 aa)) is the CRM 3 domain.

As to quaternary structure, homodimer. Interacts with RNA. Part of large ribonucleo-protein complexes that include group IIA introns and CRS1.

The protein localises to the plastid. It localises to the chloroplast stroma. Its function is as follows. Required for the splicing of group IIA introns in chloroplasts, by regulating the intron folding. Forms splicing particles with RNA. May also be involved in chloroplast protein translation. The protein is Chloroplastic group IIA intron splicing facilitator CRS1, chloroplastic of Arabidopsis thaliana (Mouse-ear cress).